A 275-amino-acid polypeptide reads, in one-letter code: Small ribosomal subunit protein uS2 (275 aa).

The disordered stretch occupies residues 232-256 (ARATDGKPEPEPVPGQELGADEPLA).

Belongs to the universal ribosomal protein uS2 family.

The chain is Small ribosomal subunit protein uS2 from Acidothermus cellulolyticus (strain ATCC 43068 / DSM 8971 / 11B).